A 308-amino-acid chain; its full sequence is Pycsar effector protein PaPycTIR (308 aa).

A nucleoside 3',5'-cyclic phosphate is bound at residue 54–143 (LITEDAEDSE…RQVTRQLVDR (90 aa)). The interval 160–278 (VFIICSVEAL…DLKGLTTIGY (119 aa)) is TIR-like.

It localises to the cytoplasm. It catalyses the reaction NAD(+) + H2O = ADP-D-ribose + nicotinamide + H(+). Pycsar (pyrimidine cyclase system for antiphage resistance) provides immunity against bacteriophage. The pyrimidine cyclase (PycC) synthesizes cyclic nucleotides in response to infection; these serve as specific second messenger signals. The signals activate the adjacent effector, leading to bacterial cell death and abortive phage infection. A clade A Pycsar system. Its function is as follows. The effector gene of a two-gene Pycsar system. Expression of this and adjacent uridylate cyclase PaPycC (AC P0DV40) probably confers resistance to bacteriophage. The genes are probably only expressed in response to bacteriophage infection. Probably only responds to cUMP (produced by its cognate NTP cyclase), acts by depleting cellular NAD(+) levels. This Pseudomonas aeruginosa protein is Pycsar effector protein PaPycTIR.